The primary structure comprises 260 residues: Hydroxyethylthiazole kinase 1 (260 aa).

M39 serves as a coordination point for substrate. The ATP site is built by R115 and T160. A substrate-binding site is contributed by G187.

It belongs to the Thz kinase family. Mg(2+) is required as a cofactor.

The enzyme catalyses 5-(2-hydroxyethyl)-4-methylthiazole + ATP = 4-methyl-5-(2-phosphooxyethyl)-thiazole + ADP + H(+). The protein operates within cofactor biosynthesis; thiamine diphosphate biosynthesis; 4-methyl-5-(2-phosphoethyl)-thiazole from 5-(2-hydroxyethyl)-4-methylthiazole: step 1/1. Functionally, catalyzes the phosphorylation of the hydroxyl group of 4-methyl-5-beta-hydroxyethylthiazole (THZ). This is Hydroxyethylthiazole kinase 1 from Streptococcus pneumoniae (strain Taiwan19F-14).